The following is an 820-amino-acid chain: Disintegrin and metalloproteinase domain-containing protein 29 (820 aa).

Positions 1 to 18 (MKMLLLLHCLGVFLSCSG) are cleaved as a signal peptide. Residues 19 to 193 (HIQDEHPQYH…TQKQSSYVGW (175 aa)) constitute a propeptide that is removed on maturation. At 194-674 (WIHFRIVEIV…GPPPKRKKKK (481 aa)) the chain is on the extracellular side. One can recognise a Peptidase M12B domain in the interval 198 to 390 (RIVEIVVVID…RTKCLLETVH (193 aa)). N-linked (GlcNAc...) asparagine glycans are attached at residues N217 and N320. Intrachain disulfides connect C307/C384, C347/C369, and C349/C354. N-linked (GlcNAc...) asparagine glycans are attached at residues N368, N428, N469, N538, N545, N558, and N564. One can recognise a Disintegrin domain in the interval 397–483 (VKRCGNGVVE…KCPDDFYVED (87 aa)). An intrachain disulfide couples C455 to C475. 3 disulfide bridges follow: C625-C636, C630-C642, and C644-C653. The EGF-like domain maps to 625–654 (CSPAFCNKRGICNNKHHCHCNYLWDPPNCL). The helical transmembrane segment at 675–695 (KFCYLCILLLIVLFILLCCLY) threads the bilayer. At 696–820 (RLCKKSKPIK…SQSQPPVTPS (125 aa)) the chain is on the cytoplasmic side. The disordered stretch occupies residues 706 to 820 (KQQDVQTPSA…SQSQPPVTPS (115 aa)). Over residues 715-727 (AKEEEKIQRRPHE) the composition is skewed to basic and acidic residues. The span at 738–820 (PSQSQPPVTP…SQSQPPVTPS (83 aa)) shows a compositional bias: low complexity. A run of 9 repeats spans residues 739–747 (SQSQPPVTP), 748–756 (SQSHPQVMP), 757–765 (SQSQPPVTP), 766–774 (SQSQPRVMP), 775–783 (SQSQPPVMP), 784–792 (SQSHPQLTP), 793–801 (SQSQPPVTP), 802–810 (SQRQPQLMP), and 811–819 (SQSQPPVTP). Residues 739–819 (SQSQPPVTPS…PSQSQPPVTP (81 aa)) form a 9 X 9 AA approximate repeats region.

In terms of tissue distribution, expressed specifically in testes.

The protein resides in the membrane. May be involved in spermatogenesis and fertilization. Seems to be a non catalytic metalloprotease-like protein. The chain is Disintegrin and metalloproteinase domain-containing protein 29 (ADAM29) from Homo sapiens (Human).